Consider the following 79-residue polypeptide: Small ribosomal subunit protein bS18B (79 aa).

The protein belongs to the bacterial ribosomal protein bS18 family. As to quaternary structure, part of the 30S ribosomal subunit. Forms a tight heterodimer with protein bS6.

Binds as a heterodimer with protein bS6 to the central domain of the 16S rRNA, where it helps stabilize the platform of the 30S subunit. This Mycolicibacterium gilvum (strain PYR-GCK) (Mycobacterium gilvum (strain PYR-GCK)) protein is Small ribosomal subunit protein bS18B.